The primary structure comprises 89 residues: Toxin To14 (89 aa).

An N-terminal signal peptide occupies residues 1-19 (MNCLMLIFVVFLLAFGVEC). The 65-residue stretch at 21–85 (KDDYPVDTAK…SPTKTSGRCN (65 aa)) folds into the LCN-type CS-alpha/beta domain. Disulfide bonds link Cys-33-Cys-84, Cys-37-Cys-60, Cys-46-Cys-67, and Cys-50-Cys-69.

In terms of tissue distribution, expressed by the venom gland.

It localises to the secreted. Inhibits voltage-gated sodium channels (Nav). In Tityus obscurus (Amazonian scorpion), this protein is Toxin To14.